The chain runs to 378 residues: MAKQDYYESLGVAKSADEREIKKAYKRLAMKYHPDRNPGDSEAEAKFKEIKEAYEILIDSQKRAAYDQYGHAAFEQGGMGGSGGGFGGGGADFGDIFGDVFGDIFGGGRRQRASRGSDLRYNMELTLEEAVRGVTKEIRIPALEECDVCHGNGAKPGSSPITCPTCHGNGQVQMRQGFFTVQQACPHCHGRGKIIKDPCVKCHGHGRVEKSKTLSVKIPAGVDTGDRIRLSGEGEAGEHGAPSGDLYVQVQVKAHPIFQREENNLYCEVPINFAMAALGGEIEVPTLDGRVKLKVPAETQTGKLFRMRGKGVKSVRGGAQGDLLCRVVVETPVNLNERQRQLLQELDESFGGPSGERNSPRSKSFFDGVKKFFDDLTR.

One can recognise a J domain in the interval 5–70 (DYYESLGVAK…QKRAAYDQYG (66 aa)). The segment at 133-211 (GVTKEIRIPA…CHGHGRVEKS (79 aa)) adopts a CR-type zinc-finger fold. Cysteine 146, cysteine 149, cysteine 163, cysteine 166, cysteine 185, cysteine 188, cysteine 199, and cysteine 202 together coordinate Zn(2+). 4 CXXCXGXG motif repeats span residues 146–153 (CDVCHGNG), 163–170 (CPTCHGNG), 185–192 (CPHCHGRG), and 199–206 (CVKCHGHG).

The protein belongs to the DnaJ family. In terms of assembly, homodimer. Zn(2+) serves as cofactor.

Its subcellular location is the cytoplasm. Functionally, participates actively in the response to hyperosmotic and heat shock by preventing the aggregation of stress-denatured proteins and by disaggregating proteins, also in an autonomous, DnaK-independent fashion. Unfolded proteins bind initially to DnaJ; upon interaction with the DnaJ-bound protein, DnaK hydrolyzes its bound ATP, resulting in the formation of a stable complex. GrpE releases ADP from DnaK; ATP binding to DnaK triggers the release of the substrate protein, thus completing the reaction cycle. Several rounds of ATP-dependent interactions between DnaJ, DnaK and GrpE are required for fully efficient folding. Also involved, together with DnaK and GrpE, in the DNA replication of plasmids through activation of initiation proteins. The sequence is that of Chaperone protein DnaJ from Pectobacterium carotovorum subsp. carotovorum (strain PC1).